Reading from the N-terminus, the 327-residue chain is GTPase Obg (327 aa).

An Obg domain is found at 1-159 (MKFVDSARIV…LKVDLELKLM (159 aa)). Residues 120–145 (GGDGGRGNPHFTTSTRQAPRYAEPGG) are disordered. An OBG-type G domain is found at 160–323 (ADVGLVGFPN…LRNALWNTIN (164 aa)). GTP is bound by residues 166-173 (GFPNAGKS), 191-195 (FTTLV), 213-216 (DIPG), 280-283 (TKMD), and 304-306 (SSI). Residues S173 and T193 each contribute to the Mg(2+) site.

It belongs to the TRAFAC class OBG-HflX-like GTPase superfamily. OBG GTPase family. As to quaternary structure, monomer. It depends on Mg(2+) as a cofactor.

Its subcellular location is the cytoplasm. In terms of biological role, an essential GTPase which binds GTP, GDP and possibly (p)ppGpp with moderate affinity, with high nucleotide exchange rates and a fairly low GTP hydrolysis rate. Plays a role in control of the cell cycle, stress response, ribosome biogenesis and in those bacteria that undergo differentiation, in morphogenesis control. This Prosthecochloris aestuarii (strain DSM 271 / SK 413) protein is GTPase Obg.